A 467-amino-acid polypeptide reads, in one-letter code: Ribulose bisphosphate carboxylase large chain (467 aa).

A propeptide spanning residues 1-2 (MS) is cleaved from the precursor. Position 3 is an N-acetylproline (proline 3). Lysine 14 is subject to N6,N6,N6-trimethyllysine. Residues asparagine 123 and threonine 173 each contribute to the substrate site. Lysine 175 serves as the catalytic Proton acceptor. Lysine 177 lines the substrate pocket. The Mg(2+) site is built by lysine 201, aspartate 203, and glutamate 204. N6-carboxylysine is present on lysine 201. Histidine 294 serves as the catalytic Proton acceptor. 3 residues coordinate substrate: arginine 295, histidine 327, and serine 379.

This sequence belongs to the RuBisCO large chain family. Type I subfamily. In terms of assembly, heterohexadecamer of 8 large chains and 8 small chains; disulfide-linked. The disulfide link is formed within the large subunit homodimers. Mg(2+) serves as cofactor. In terms of processing, the disulfide bond which can form in the large chain dimeric partners within the hexadecamer appears to be associated with oxidative stress and protein turnover.

The protein resides in the plastid. It is found in the chloroplast. The catalysed reaction is 2 (2R)-3-phosphoglycerate + 2 H(+) = D-ribulose 1,5-bisphosphate + CO2 + H2O. The enzyme catalyses D-ribulose 1,5-bisphosphate + O2 = 2-phosphoglycolate + (2R)-3-phosphoglycerate + 2 H(+). RuBisCO catalyzes two reactions: the carboxylation of D-ribulose 1,5-bisphosphate, the primary event in carbon dioxide fixation, as well as the oxidative fragmentation of the pentose substrate in the photorespiration process. Both reactions occur simultaneously and in competition at the same active site. This chain is Ribulose bisphosphate carboxylase large chain, found in Phoenix reclinata (Senegal date palm).